The chain runs to 800 residues: General transcription and DNA repair factor IIH helicase/translocase subunit XPB (800 aa).

The tract at residues 1-27 (MSSGDSNLKRRRGGNTGQSSKSYNTWT) is disordered. Over residues 17-27 (GQSSKSYNTWT) the composition is skewed to polar residues. The Helicase ATP-binding domain maps to 329–491 (MFGNGRARSG…DLNFLIGPKL (163 aa)). 342-349 (LPCGAGKS) provides a ligand contact to ATP. Positions 444-447 (DEVH) match the DEVH box motif. The region spanning 546–704 (RACEYLIRFH…ELPGIDQEVN (159 aa)) is the Helicase C-terminal domain. The interval 743–769 (GAKKSKSSAPTVSRTTGGSTRALSGGN) is disordered. Positions 749 to 764 (SSAPTVSRTTGGSTRA) are enriched in polar residues.

The protein belongs to the helicase family. RAD25/XPB subfamily. As to quaternary structure, component of the 7-subunit TFIIH core complex composed of XPB/repB, XPD/repD, gtf2h1, gtf2h2, gtf2h3, gtf2h4 and gtf2h5, which is active in NER. The core complex associates with the 3-subunit CDK-activating kinase (CAK) module composed of cycH/cyclin H, cdk7 and mnat1 to form the 10-subunit holoenzyme (holo-TFIIH) active in transcription.

The protein resides in the nucleus. The enzyme catalyses Couples ATP hydrolysis with the unwinding of duplex DNA by translocating in the 3'-5' direction.. It carries out the reaction ATP + H2O = ADP + phosphate + H(+). Its function is as follows. ATP-dependent 3'-5' DNA helicase/translocase; binds dsDNA rather than ssDNA, unzipping it in a translocase rather than classical helicase activity. Component of the general transcription and DNA repair factor IIH (TFIIH) core complex. When complexed to CDK-activating kinase (CAK), involved in RNA transcription by RNA polymerase II. The ATPase activity of XPB/ERCC3, but not its helicase activity, is required for DNA opening; it may wrap around the damaged DNA wedging it open, causing localized melting and twisting that allows XPD/ERCC2 helicase to anchor. The ATP-dependent helicase activity of XPB/ERCC3 may be required for promoter escape. Also involved in transcription-coupled nucleotide excision repair (NER) of damaged DNA. In NER, TFIIH acts by opening DNA around the lesion to allow the excision of the damaged oligonucleotide and its replacement by a new DNA fragment. The structure of the TFIIH transcription complex differs from the NER-TFIIH complex. The polypeptide is General transcription and DNA repair factor IIH helicase/translocase subunit XPB (Dictyostelium discoideum (Social amoeba)).